The following is a 266-amino-acid chain: Tropinone reductase homolog At1g07440 (266 aa).

18-42 (LVTGGTKGIGHAIVEEFAGFGAVIH) provides a ligand contact to NADP(+). Ser-151 provides a ligand contact to substrate. The active-site Proton acceptor is Tyr-164.

This sequence belongs to the short-chain dehydrogenases/reductases (SDR) family. SDR65C subfamily.

This Arabidopsis thaliana (Mouse-ear cress) protein is Tropinone reductase homolog At1g07440.